Consider the following 205-residue polypeptide: Large ribosomal subunit protein uL3 (205 aa).

Belongs to the universal ribosomal protein uL3 family. As to quaternary structure, part of the 50S ribosomal subunit. Forms a cluster with proteins L14 and L19.

One of the primary rRNA binding proteins, it binds directly near the 3'-end of the 23S rRNA, where it nucleates assembly of the 50S subunit. In Parabacteroides distasonis (strain ATCC 8503 / DSM 20701 / CIP 104284 / JCM 5825 / NCTC 11152), this protein is Large ribosomal subunit protein uL3.